A 718-amino-acid chain; its full sequence is Polyribonucleotide nucleotidyltransferase (718 aa).

Mg(2+) contacts are provided by Asp-506 and Asp-512. The KH domain occupies 572–632; the sequence is PKLELFSVDP…EQIKAAKDYI (61 aa). The S1 motif domain maps to 657–718; that stretch reads GQEFQGIVKK…NGKISVDLCE (62 aa).

This sequence belongs to the polyribonucleotide nucleotidyltransferase family. Mg(2+) serves as cofactor.

It is found in the cytoplasm. The catalysed reaction is RNA(n+1) + phosphate = RNA(n) + a ribonucleoside 5'-diphosphate. Its function is as follows. Involved in mRNA degradation. Catalyzes the phosphorolysis of single-stranded polyribonucleotides processively in the 3'- to 5'-direction. In Campylobacter jejuni subsp. doylei (strain ATCC BAA-1458 / RM4099 / 269.97), this protein is Polyribonucleotide nucleotidyltransferase.